Here is a 529-residue protein sequence, read N- to C-terminus: Bifunctional purine biosynthesis protein PurH (529 aa).

The region spanning M1–T146 is the MGS-like domain.

The protein belongs to the PurH family.

It carries out the reaction (6R)-10-formyltetrahydrofolate + 5-amino-1-(5-phospho-beta-D-ribosyl)imidazole-4-carboxamide = 5-formamido-1-(5-phospho-D-ribosyl)imidazole-4-carboxamide + (6S)-5,6,7,8-tetrahydrofolate. The enzyme catalyses IMP + H2O = 5-formamido-1-(5-phospho-D-ribosyl)imidazole-4-carboxamide. Its pathway is purine metabolism; IMP biosynthesis via de novo pathway; 5-formamido-1-(5-phospho-D-ribosyl)imidazole-4-carboxamide from 5-amino-1-(5-phospho-D-ribosyl)imidazole-4-carboxamide (10-formyl THF route): step 1/1. The protein operates within purine metabolism; IMP biosynthesis via de novo pathway; IMP from 5-formamido-1-(5-phospho-D-ribosyl)imidazole-4-carboxamide: step 1/1. In Synechococcus sp. (strain CC9311), this protein is Bifunctional purine biosynthesis protein PurH.